A 224-amino-acid polypeptide reads, in one-letter code: Urease accessory protein UreF (224 aa).

This sequence belongs to the UreF family. As to quaternary structure, ureD, UreF and UreG form a complex that acts as a GTP-hydrolysis-dependent molecular chaperone, activating the urease apoprotein by helping to assemble the nickel containing metallocenter of UreC. The UreE protein probably delivers the nickel.

It localises to the cytoplasm. In terms of biological role, required for maturation of urease via the functional incorporation of the urease nickel metallocenter. This Enterobacter sp. (strain 638) protein is Urease accessory protein UreF.